We begin with the raw amino-acid sequence, 216 residues long: FMN-dependent NADH:quinone oxidoreductase 2 (216 aa).

FMN is bound by residues Ser-9, 15 to 17 (SVS), 96 to 99 (MYNF), and 140 to 143 (SRGG).

This sequence belongs to the azoreductase type 1 family. Homodimer. FMN is required as a cofactor.

The catalysed reaction is 2 a quinone + NADH + H(+) = 2 a 1,4-benzosemiquinone + NAD(+). It carries out the reaction N,N-dimethyl-1,4-phenylenediamine + anthranilate + 2 NAD(+) = 2-(4-dimethylaminophenyl)diazenylbenzoate + 2 NADH + 2 H(+). Functionally, quinone reductase that provides resistance to thiol-specific stress caused by electrophilic quinones. Also exhibits azoreductase activity. Catalyzes the reductive cleavage of the azo bond in aromatic azo compounds to the corresponding amines. The sequence is that of FMN-dependent NADH:quinone oxidoreductase 2 from Xanthomonas axonopodis pv. citri (strain 306).